The primary structure comprises 104 residues: Transcription initiation factor IIA subunit 2 (104 aa).

This sequence belongs to the TFIIA subunit 2 family. TFIIA is a heterodimer of the large unprocessed subunit 1 and a small subunit gamma.

The protein localises to the nucleus. TFIIA is a component of the transcription machinery of RNA polymerase II and plays an important role in transcriptional activation. TFIIA in a complex with TBP mediates transcriptional activity. The chain is Transcription initiation factor IIA subunit 2 from Schistosoma mansoni (Blood fluke).